We begin with the raw amino-acid sequence, 932 residues long: Isoleucine--tRNA ligase (932 aa).

Residues 58-68 (PYANGDIHIGH) carry the 'HIGH' region motif. Position 570 (E570) interacts with L-isoleucyl-5'-AMP. The 'KMSKS' region signature appears at 611-615 (KMSKS). Residue K614 participates in ATP binding. The Zn(2+) site is built by C895, C898, C915, and C918.

This sequence belongs to the class-I aminoacyl-tRNA synthetase family. IleS type 1 subfamily. As to quaternary structure, monomer. Zn(2+) serves as cofactor.

The protein resides in the cytoplasm. The enzyme catalyses tRNA(Ile) + L-isoleucine + ATP = L-isoleucyl-tRNA(Ile) + AMP + diphosphate. Its function is as follows. Catalyzes the attachment of isoleucine to tRNA(Ile). As IleRS can inadvertently accommodate and process structurally similar amino acids such as valine, to avoid such errors it has two additional distinct tRNA(Ile)-dependent editing activities. One activity is designated as 'pretransfer' editing and involves the hydrolysis of activated Val-AMP. The other activity is designated 'posttransfer' editing and involves deacylation of mischarged Val-tRNA(Ile). The chain is Isoleucine--tRNA ligase from Dechloromonas aromatica (strain RCB).